The chain runs to 92 residues: Ferredoxin-like protein in nif region (92 aa).

4Fe-4S ferredoxin-type domains follow at residues 2–28 and 29–65; these read ALKIVESCVNCWACVDVCPSEAISLAG and PHFEISASKCTECDGDYAEKQCASICPVEGAILLADG. Residues Cys-9, Cys-12, Cys-15, Cys-19, Cys-38, Cys-41, Cys-50, and Cys-54 each contribute to the [4Fe-4S] cluster site.

[4Fe-4S] cluster serves as cofactor.

Ferredoxins are iron-sulfur proteins that transfer electrons in a wide variety of metabolic reactions. The protein is Ferredoxin-like protein in nif region of Azotobacter vinelandii.